A 328-amino-acid chain; its full sequence is GMP reductase (328 aa).

Cys176 acts as the Thioimidate intermediate in catalysis. 205 to 228 is a binding site for NADP(+); sequence IIADGGIRTHGDIAKSIRFGASMI.

This sequence belongs to the IMPDH/GMPR family. GuaC type 2 subfamily.

The catalysed reaction is IMP + NH4(+) + NADP(+) = GMP + NADPH + 2 H(+). In terms of biological role, catalyzes the irreversible NADPH-dependent deamination of GMP to IMP. It functions in the conversion of nucleobase, nucleoside and nucleotide derivatives of G to A nucleotides, and in maintaining the intracellular balance of A and G nucleotides. This Streptococcus pneumoniae (strain Taiwan19F-14) protein is GMP reductase.